Here is a 381-residue protein sequence, read N- to C-terminus: Queuine tRNA-ribosyltransferase (381 aa).

Aspartate 89 (proton acceptor) is an active-site residue. Residues 89–93 (DSGGF), aspartate 143, glutamine 187, and glycine 214 each bind substrate. Residues 245–251 (GVGKPED) are RNA binding. Aspartate 264 (nucleophile) is an active-site residue. An RNA binding; important for wobble base 34 recognition region spans residues 269 to 273 (TRNAR). 4 residues coordinate Zn(2+): cysteine 302, cysteine 304, cysteine 307, and histidine 333.

It belongs to the queuine tRNA-ribosyltransferase family. In terms of assembly, homodimer. Within each dimer, one monomer is responsible for RNA recognition and catalysis, while the other monomer binds to the replacement base PreQ1. Zn(2+) is required as a cofactor.

It carries out the reaction 7-aminomethyl-7-carbaguanine + guanosine(34) in tRNA = 7-aminomethyl-7-carbaguanosine(34) in tRNA + guanine. It functions in the pathway tRNA modification; tRNA-queuosine biosynthesis. Its function is as follows. Catalyzes the base-exchange of a guanine (G) residue with the queuine precursor 7-aminomethyl-7-deazaguanine (PreQ1) at position 34 (anticodon wobble position) in tRNAs with GU(N) anticodons (tRNA-Asp, -Asn, -His and -Tyr). Catalysis occurs through a double-displacement mechanism. The nucleophile active site attacks the C1' of nucleotide 34 to detach the guanine base from the RNA, forming a covalent enzyme-RNA intermediate. The proton acceptor active site deprotonates the incoming PreQ1, allowing a nucleophilic attack on the C1' of the ribose to form the product. After dissociation, two additional enzymatic reactions on the tRNA convert PreQ1 to queuine (Q), resulting in the hypermodified nucleoside queuosine (7-(((4,5-cis-dihydroxy-2-cyclopenten-1-yl)amino)methyl)-7-deazaguanosine). The sequence is that of Queuine tRNA-ribosyltransferase from Pectobacterium carotovorum subsp. carotovorum (strain PC1).